We begin with the raw amino-acid sequence, 511 residues long: Mannosyl-oligosaccharide alpha-1,2-mannosidase (511 aa).

The first 35 residues, 1 to 35 (MRLPVSFPLTVLSLLGSTIAHPYGETEAVLRSEPK), serve as a signal peptide directing secretion. Residue Asn182 is glycosylated (N-linked (GlcNAc...) asparagine). Cys332 and Cys361 are oxidised to a cystine. An N-linked (GlcNAc...) asparagine glycan is attached at Asn366. Asp375 serves as the catalytic Proton donor. Residue Asn438 is glycosylated (N-linked (GlcNAc...) asparagine). Thr501 is a Ca(2+) binding site.

This sequence belongs to the glycosyl hydrolase 47 family. In terms of assembly, homodimer. The cofactor is Ca(2+).

Its subcellular location is the secreted. It catalyses the reaction N(4)-(alpha-D-Man-(1-&gt;2)-alpha-D-Man-(1-&gt;2)-alpha-D-Man-(1-&gt;3)-[alpha-D-Man-(1-&gt;2)-alpha-D-Man-(1-&gt;3)-[alpha-D-Man-(1-&gt;2)-alpha-D-Man-(1-&gt;6)]-alpha-D-Man-(1-&gt;6)]-beta-D-Man-(1-&gt;4)-beta-D-GlcNAc-(1-&gt;4)-beta-D-GlcNAc)-L-asparaginyl-[protein] (N-glucan mannose isomer 9A1,2,3B1,2,3) + 4 H2O = N(4)-(alpha-D-Man-(1-&gt;3)-[alpha-D-Man-(1-&gt;3)-[alpha-D-Man-(1-&gt;6)]-alpha-D-Man-(1-&gt;6)]-beta-D-Man-(1-&gt;4)-beta-D-GlcNAc-(1-&gt;4)-beta-D-GlcNAc)-L-asparaginyl-[protein] (N-glucan mannose isomer 5A1,2) + 4 beta-D-mannose. The enzyme catalyses N(4)-(alpha-D-Man-(1-&gt;2)-alpha-D-Man-(1-&gt;2)-alpha-D-Man-(1-&gt;3)-[alpha-D-Man-(1-&gt;3)-[alpha-D-Man-(1-&gt;2)-alpha-D-Man-(1-&gt;6)]-alpha-D-Man-(1-&gt;6)]-beta-D-Man-(1-&gt;4)-beta-D-GlcNAc-(1-&gt;4)-beta-D-GlcNAc)-L-asparaginyl-[protein] (N-glucan mannose isomer 8A1,2,3B1,3) + 3 H2O = N(4)-(alpha-D-Man-(1-&gt;3)-[alpha-D-Man-(1-&gt;3)-[alpha-D-Man-(1-&gt;6)]-alpha-D-Man-(1-&gt;6)]-beta-D-Man-(1-&gt;4)-beta-D-GlcNAc-(1-&gt;4)-beta-D-GlcNAc)-L-asparaginyl-[protein] (N-glucan mannose isomer 5A1,2) + 3 beta-D-mannose. It participates in protein modification; protein glycosylation. Its function is as follows. Involved in the maturation of Asn-linked oligosaccharides. Progressively trim alpha-1,2-linked mannose residues from Man(9)GlcNAc(2) to produce Man(5)GlcNAc(2). The chain is Mannosyl-oligosaccharide alpha-1,2-mannosidase (MSDC) from Penicillium citrinum.